We begin with the raw amino-acid sequence, 230 residues long: Urease accessory protein UreF (230 aa).

It belongs to the UreF family. In terms of assembly, ureD, UreF and UreG form a complex that acts as a GTP-hydrolysis-dependent molecular chaperone, activating the urease apoprotein by helping to assemble the nickel containing metallocenter of UreC. The UreE protein probably delivers the nickel.

Its subcellular location is the cytoplasm. Its function is as follows. Required for maturation of urease via the functional incorporation of the urease nickel metallocenter. The protein is Urease accessory protein UreF of Allorhizobium ampelinum (strain ATCC BAA-846 / DSM 112012 / S4) (Agrobacterium vitis (strain S4)).